Reading from the N-terminus, the 187-residue chain is Frataxin, mitochondrial (187 aa).

Belongs to the frataxin family. Monomer. Oligomer. Interacts with NIFS1.

It is found in the mitochondrion. The enzyme catalyses 4 Fe(2+) + O2 + 4 H(+) = 4 Fe(3+) + 2 H2O. Functionally, promotes the biosynthesis of heme as well as the assembly and repair of iron-sulfur clusters by delivering Fe(2+) to proteins involved in these pathways. May play a role in the protection against iron-catalyzed oxidative stress through its ability to catalyze the oxidation of Fe(2+) to Fe(3+). May be able to store large amounts of the metal in the form of a ferrihydrite mineral by oligomerization. Binds to the mitochondrial cysteine desulfurase NIFS1 and increases its activity. This Arabidopsis thaliana (Mouse-ear cress) protein is Frataxin, mitochondrial (FH).